The primary structure comprises 557 residues: Polypyrimidine tract-binding protein 1 (557 aa).

Met-1 is subject to N-acetylmethionine. At Ser-16 the chain carries Phosphoserine. 3 RRM domains span residues 59–143 (RVIH…SSPN), 184–260 (LRII…FSKL), and 363–437 (SVLL…LSKH). A Glycyl lysine isopeptide (Lys-Gly) (interchain with G-Cter in SUMO2) cross-link involves residue Lys-65. Position 127 is a phosphotyrosine (Tyr-127). Thr-138 carries the post-translational modification Phosphothreonine. At Ser-141 the chain carries Phosphoserine. Residue Lys-218 forms a Glycyl lysine isopeptide (Lys-Gly) (interchain with G-Cter in SUMO2) linkage. Ser-459 is subject to Phosphoserine. In terms of domain architecture, RRM 4 spans 480–555 (ATLHLSNIPP…HHLRVSFSKS (76 aa)).

In terms of assembly, monomer. Part of a ternary complex containing KHSRP, PTBP1, PTBP2 and HNRPH1. Interacts with RAVER1 and SFPQ.

Its subcellular location is the nucleus. In terms of biological role, plays a role in pre-mRNA splicing and in the regulation of alternative splicing events. Activates exon skipping of its own pre-mRNA during muscle cell differentiation. Binds to the polypyrimidine tract of introns. May promote RNA looping when bound to two separate polypyrimidine tracts in the same pre-mRNA. May promote the binding of U2 snRNP to pre-mRNA. Cooperates with RAVER1 to modulate switching between mutually exclusive exons during maturation of the TPM1 pre-mRNA. Represses the splicing of MAPT/Tau exon 10. Binds to polypyrimidine-rich controlling element (PCE) of CFTR and promotes exon skipping of CFTR exon 9, thereby antagonizing TIA1 and its role in exon inclusion of CFTR exon 9. Plays a role in the splicing of pyruvate kinase PKM by binding repressively to a polypyrimidine tract flanking PKM exon 9, inhibiting exon 9 inclusion and resulting in exon 10 inclusion and production of the PKM M2 isoform. The protein is Polypyrimidine tract-binding protein 1 (PTBP1) of Sus scrofa (Pig).